Here is a 447-residue protein sequence, read N- to C-terminus: Glutamate--tRNA ligase 1 (447 aa).

The 'HIGH' region signature appears at 10–20 (PSPTGMLHVGN). The 'KMSKS' region motif lies at 240–244 (KISKR). Residue K243 coordinates ATP.

Belongs to the class-I aminoacyl-tRNA synthetase family. Glutamate--tRNA ligase type 1 subfamily. Monomer.

The protein localises to the cytoplasm. The catalysed reaction is tRNA(Glu) + L-glutamate + ATP = L-glutamyl-tRNA(Glu) + AMP + diphosphate. Catalyzes the attachment of glutamate to tRNA(Glu) in a two-step reaction: glutamate is first activated by ATP to form Glu-AMP and then transferred to the acceptor end of tRNA(Glu). The sequence is that of Glutamate--tRNA ligase 1 from Rickettsia felis (strain ATCC VR-1525 / URRWXCal2) (Rickettsia azadi).